We begin with the raw amino-acid sequence, 255 residues long: MALLQWMLDHVQDEEKNCENLSIDDQHSLFGINRDWLSFLQLSKLEITHLKHVYKLVDNDRAHLMVHPSSDNVHAWSFLCKPDNVKVVILGQDPYPDGRGCGLAFGTVKECSIPESLKNIFKELERSVPNFSPPDNGCLNSWCSEGVLLLNSIFTVVHGLPMSHEAFGWQTLSYKIISKLSVEMDSLVFLLWGNHARKLSYLIDARKHLVLESAHPSPKVKSARMPFIGCNHFVRANLFLTEHGKDPINWNILNE.

The active-site Proton acceptor is the D93.

Belongs to the uracil-DNA glycosylase (UDG) superfamily. UNG family.

It localises to the host nucleus. The enzyme catalyses Hydrolyzes single-stranded DNA or mismatched double-stranded DNA and polynucleotides, releasing free uracil.. Functionally, excises uracil residues from the DNA which can arise as a result of misincorporation of dUMP residues by DNA polymerase or deamination of cytosines. Therefore may reduce deleterious uracil incorporation into the viral genome, particularly in terminally differentiated cells which lack DNA repair enzymes. This Human herpesvirus 6A (strain Uganda-1102) (HHV-6 variant A) protein is Uracil-DNA glycosylase (U81).